The following is an 87-amino-acid chain: Cell division topological specificity factor (87 aa).

The protein belongs to the MinE family.

Its function is as follows. Prevents the cell division inhibition by proteins MinC and MinD at internal division sites while permitting inhibition at polar sites. This ensures cell division at the proper site by restricting the formation of a division septum at the midpoint of the long axis of the cell. The chain is Cell division topological specificity factor from Neisseria gonorrhoeae (strain ATCC 700825 / FA 1090).